The following is a 371-amino-acid chain: Carbamoyl phosphate synthase small chain (371 aa).

Residues 1 to 186 (MDYYNNDTPG…IHQGKTGDVV (186 aa)) form a CPSase region. Residues Ser52, Gly233, and Gly235 each coordinate L-glutamine. In terms of domain architecture, Glutamine amidotransferase type-1 spans 185–371 (VVVVVDCGIK…KFKKMVVGDA (187 aa)). Cys261 acts as the Nucleophile in catalysis. Residues Leu262, Gln265, Asn303, Gly305, and Tyr306 each coordinate L-glutamine. Residues His346 and Glu348 contribute to the active site.

The protein belongs to the CarA family. In terms of assembly, composed of two chains; the small (or glutamine) chain promotes the hydrolysis of glutamine to ammonia, which is used by the large (or ammonia) chain to synthesize carbamoyl phosphate. Tetramer of heterodimers (alpha,beta)4.

It carries out the reaction hydrogencarbonate + L-glutamine + 2 ATP + H2O = carbamoyl phosphate + L-glutamate + 2 ADP + phosphate + 2 H(+). The catalysed reaction is L-glutamine + H2O = L-glutamate + NH4(+). It functions in the pathway amino-acid biosynthesis; L-arginine biosynthesis; carbamoyl phosphate from bicarbonate: step 1/1. It participates in pyrimidine metabolism; UMP biosynthesis via de novo pathway; (S)-dihydroorotate from bicarbonate: step 1/3. Functionally, small subunit of the glutamine-dependent carbamoyl phosphate synthetase (CPSase). CPSase catalyzes the formation of carbamoyl phosphate from the ammonia moiety of glutamine, carbonate, and phosphate donated by ATP, constituting the first step of 2 biosynthetic pathways, one leading to arginine and/or urea and the other to pyrimidine nucleotides. The small subunit (glutamine amidotransferase) binds and cleaves glutamine to supply the large subunit with the substrate ammonia. The chain is Carbamoyl phosphate synthase small chain from Sulfolobus acidocaldarius (strain ATCC 33909 / DSM 639 / JCM 8929 / NBRC 15157 / NCIMB 11770).